The following is a 285-amino-acid chain: Pantothenate synthetase (285 aa).

Residue Met30–His37 participates in ATP binding. The active-site Proton donor is His37. Residue Gln61 coordinates (R)-pantoate. Gln61 provides a ligand contact to beta-alanine. Position 149 to 152 (Gly149 to Asp152) interacts with ATP. (R)-pantoate is bound at residue Gln155. Residues Val178 and Leu186–Arg189 each bind ATP.

Belongs to the pantothenate synthetase family. Homodimer.

The protein resides in the cytoplasm. It carries out the reaction (R)-pantoate + beta-alanine + ATP = (R)-pantothenate + AMP + diphosphate + H(+). The protein operates within cofactor biosynthesis; (R)-pantothenate biosynthesis; (R)-pantothenate from (R)-pantoate and beta-alanine: step 1/1. Catalyzes the condensation of pantoate with beta-alanine in an ATP-dependent reaction via a pantoyl-adenylate intermediate. The chain is Pantothenate synthetase from Aeromonas hydrophila subsp. hydrophila (strain ATCC 7966 / DSM 30187 / BCRC 13018 / CCUG 14551 / JCM 1027 / KCTC 2358 / NCIMB 9240 / NCTC 8049).